Reading from the N-terminus, the 188-residue chain is Large ribosomal subunit protein uL5 (188 aa).

It belongs to the universal ribosomal protein uL5 family. Part of the 50S ribosomal subunit; contacts the 5S rRNA and probably tRNA. Forms a bridge to the 30S subunit in the 70S ribosome.

Its function is as follows. This is one of the proteins that bind and probably mediate the attachment of the 5S RNA into the large ribosomal subunit, where it forms part of the central protuberance. In the 70S ribosome it contacts protein S13 of the 30S subunit (bridge B1b), connecting the 2 subunits; this bridge is implicated in subunit movement. May contact the P site tRNA; the 5S rRNA and some of its associated proteins might help stabilize positioning of ribosome-bound tRNAs. The polypeptide is Large ribosomal subunit protein uL5 (Pyrococcus horikoshii (strain ATCC 700860 / DSM 12428 / JCM 9974 / NBRC 100139 / OT-3)).